The following is a 242-amino-acid chain: Proteasome subunit alpha (242 aa).

This sequence belongs to the peptidase T1A family. As to quaternary structure, the 20S proteasome core is composed of 14 alpha and 14 beta subunits that assemble into four stacked heptameric rings, resulting in a barrel-shaped structure. The two inner rings, each composed of seven catalytic beta subunits, are sandwiched by two outer rings, each composed of seven alpha subunits. The catalytic chamber with the active sites is on the inside of the barrel. Has a gated structure, the ends of the cylinder being occluded by the N-termini of the alpha-subunits. Is capped by the proteasome-associated ATPase, ARC.

It localises to the cytoplasm. It functions in the pathway protein degradation; proteasomal Pup-dependent pathway. Its activity is regulated as follows. The formation of the proteasomal ATPase ARC-20S proteasome complex, likely via the docking of the C-termini of ARC into the intersubunit pockets in the alpha-rings, may trigger opening of the gate for substrate entry. Interconversion between the open-gate and close-gate conformations leads to a dynamic regulation of the 20S proteasome proteolysis activity. In terms of biological role, component of the proteasome core, a large protease complex with broad specificity involved in protein degradation. In Renibacterium salmoninarum (strain ATCC 33209 / DSM 20767 / JCM 11484 / NBRC 15589 / NCIMB 2235), this protein is Proteasome subunit alpha.